A 505-amino-acid polypeptide reads, in one-letter code: Lysine--tRNA ligase 1 (505 aa).

Positions 415 and 422 each coordinate Mg(2+).

It belongs to the class-II aminoacyl-tRNA synthetase family. As to quaternary structure, homodimer. It depends on Mg(2+) as a cofactor.

The protein resides in the cytoplasm. The catalysed reaction is tRNA(Lys) + L-lysine + ATP = L-lysyl-tRNA(Lys) + AMP + diphosphate. The sequence is that of Lysine--tRNA ligase 1 (lysS1) from Mycobacterium bovis (strain ATCC BAA-935 / AF2122/97).